Reading from the N-terminus, the 555-residue chain is (+)-delta-cadinene synthase isozyme A (555 aa).

Residues 1–22 form a disordered region; the sequence is MASQASQVLASPHPAISSENRP. Mg(2+)-binding residues include Asp-308, Asp-312, Asp-452, and Glu-456. Residues 308–312 carry the DDXXD motif motif; that stretch reads DDTYD.

This sequence belongs to the terpene synthase family. Mg(2+) is required as a cofactor.

It carries out the reaction (2E,6E)-farnesyl diphosphate = (1S,8aR)-delta-cadinene + diphosphate. It participates in secondary metabolite biosynthesis; terpenoid biosynthesis. Functionally, responsible for the cyclization of trans,trans-farnesyl diphosphate (FPP) to (+)-delta cadinene. The protein is (+)-delta-cadinene synthase isozyme A (CAD1-A) of Gossypium arboreum (Tree cotton).